A 561-amino-acid chain; its full sequence is Reductase FVEG_12641 (561 aa).

The disordered stretch occupies residues 1–26; sequence MGVQSTANLPKETVSHLDTAPTPKPG. The MOSC domain occupies 52-189; the sequence is QQHDGPVFCS…ICKGDTISLL (138 aa). The region spanning 237–342 is the FAD-binding FR-type domain; the sequence is SAPKTYTLVD…PGSNPGAMEN (106 aa). Residues 288-289, 305-307, 313-316, and threonine 362 each bind FMN; these read FE, GVS, and RGGS. The 88-residue stretch at 474-561 folds into the 2Fe-2S ferredoxin-type domain; it reads FEVEVDEPDS…GIGRLRIEID (88 aa). Position 512 (cysteine 512) interacts with [2Fe-2S] cluster. Serine 514 contributes to the FMN binding site. Cysteine 517, cysteine 520, and cysteine 548 together coordinate [2Fe-2S] cluster.

The protein belongs to the PDR/VanB family. As to quaternary structure, monomer. Requires FMN as cofactor.

Functionally, reductase; part of the Fusarium detoxification of benzoxazolinone cluster 2 (FDB2) involved in the degradation of benzoxazolinones produced by the host plant. Maize, wheat, and rye produce the 2 benzoxazinone phytoanticipins 2,4-dihy-droxy-7-methoxy-1,4-benzoxazin-3-one (DIMBOA) and 2,4-dihydroxy-1,4-benzoxazin-3-one (DIBOA) that, due to their inherent instability once released, spontaneously degrade to the more stable corresponding benzoxazolinones, 6-methoxy-2-benzoxazolinone (MBOA) and 2-benzoxazolinone (BOA), respectively. The first step in the detoxification of benzoxazolinones involves the hydrolysis of the cyclic ester bond of benzoxazolinones by the FDB1 cluster gamma-lactamase MBL1 to aminophenols. MBL1 is able to convert BOA into 2-aminophenol (2-AP), as well as MBOA into 5-methoxy-2-aminophenol (2-AMP). The FDB2 cluster N-malonyltransferase FDB2/NAT1 then metabolizes aminophenols via N-malonylation to non-toxic malonamic acids. FDB2/NAT1 converts 2-AP into N-(2-hydroxyphenyl) malonamic acid (HPMA) and 2-AMP into N-(2-hydroxy-4-methoxyphenyl) malonamic acid (HMPMA). The duplicated dienlactone hydrolases DLH1 and DLH2 may provide redundant function for hydrolyzing the lactone moiety in the BOA molecule. The roles of the amidases an other enzymes encoded by the 2 FDB clusters have not been identified so far. This is Reductase FVEG_12641 from Gibberella moniliformis (strain M3125 / FGSC 7600) (Maize ear and stalk rot fungus).